Here is a 317-residue protein sequence, read N- to C-terminus: Peroxisome biogenesis protein 7 (317 aa).

6 WD repeats span residues 58-98 (DTAD…PSNP), 104-144 (EHAR…SVRT), 147-187 (EHAY…STMI), 190-230 (AHDF…VPLA), 234-274 (GHGY…ALVG), and 278-317 (HHTE…PRAS).

It belongs to the WD repeat peroxin-7 family. As to quaternary structure, interacts with PEX5; interaction only takes place when PEX7 is associated with cargo proteins. Interacts with PEX13 (via N-terminus) and PEX12 (via C-terminus), but not with PEX14. As to expression, expressed in siliques and leaves, but barely detectable in flowers, stems and roots.

The protein localises to the cytoplasm. It localises to the cytosol. The protein resides in the peroxisome matrix. In terms of biological role, receptor required for the peroxisomal import of proteins containing a C-terminal PTS2-type peroxisomal targeting signal. Specifically binds to cargo proteins containing a PTS2 peroxisomal targeting signal in the cytosol. Cargo protein-binding triggers interaction with PEX5 and formation of a ternary complex composed of PEX5 and PEX7 along with PTS2-containing cargo proteins, which is tranlocated into peroxisomes by passing through the PEX13-PEX14 docking complex. The protein is Peroxisome biogenesis protein 7 (PEX7) of Arabidopsis thaliana (Mouse-ear cress).